Here is a 357-residue protein sequence, read N- to C-terminus: uncharacterized protein (357 aa).

A PNPLA domain is found at 27–196 (LVCEGGGQRG…SDAIPVKEAA (170 aa)). Positions 31-36 (GGGQRG) match the GXGXXG motif. A GXSXG motif is present at residues 59 to 63 (GTSAG). Ser61 serves as the catalytic Nucleophile. Asp183 acts as the Proton acceptor in catalysis. The short motif at 183–185 (DGG) is the DGA/G element.

Functionally, probable lipid hydrolase. This is an uncharacterized protein from Escherichia coli (strain K12).